Consider the following 202-residue polypeptide: Probable chemoreceptor glutamine deamidase CheD (202 aa).

Belongs to the CheD family.

The catalysed reaction is L-glutaminyl-[protein] + H2O = L-glutamyl-[protein] + NH4(+). Probably deamidates glutamine residues to glutamate on methyl-accepting chemotaxis receptors (MCPs), playing an important role in chemotaxis. This chain is Probable chemoreceptor glutamine deamidase CheD, found in Thiobacillus denitrificans (strain ATCC 25259 / T1).